The following is a 535-amino-acid chain: Alpha-1,3-mannosyl-glycoprotein 4-beta-N-acetylglucosaminyltransferase A (535 aa).

Residues methionine 1–arginine 4 lie on the Cytoplasmic side of the membrane. The chain crosses the membrane as a helical; Signal-anchor for type II membrane protein span at residues asparagine 5–tryptophan 27. The stretch at glutamine 28–asparagine 63 forms a coiled coil. Residues glutamine 28–lysine 535 are Lumenal-facing. Residues asparagine 77 and asparagine 458 are each glycosylated (N-linked (GlcNAc...) asparagine). A Phosphoserine modification is found at serine 474.

Belongs to the glycosyltransferase 54 family. A divalent metal cation is required as a cofactor. In terms of processing, N-glycosylated.

Its subcellular location is the golgi apparatus membrane. The protein resides in the secreted. The catalysed reaction is N(4)-{beta-D-GlcNAc-(1-&gt;2)-alpha-D-Man-(1-&gt;3)-[beta-D-GlcNAc-(1-&gt;2)-alpha-D-Man-(1-&gt;6)]-beta-D-Man-(1-&gt;4)-beta-D-GlcNAc-(1-&gt;4)-beta-D-GlcNAc}-L-asparaginyl-[protein] + UDP-N-acetyl-alpha-D-glucosamine = N(4)-{beta-D-GlcNAc-(1-&gt;2)-[beta-D-GlcNAc-(1-&gt;4)]-alpha-D-Man-(1-&gt;3)-[beta-D-GlcNAc-(1-&gt;2)-alpha-D-Man-(1-&gt;6)]-beta-D-Man-(1-&gt;4)-beta-D-GlcNAc-(1-&gt;4)-beta-D-GlcNAc}-L-asparaginyl-[protein] + UDP + H(+). It carries out the reaction an N(4)-{beta-D-GlcNAc-(1-&gt;2)-alpha-D-Man-(1-&gt;3)-[alpha-D-Man-(1-&gt;6)]-beta-D-Man-(1-&gt;4)-beta-D-GlcNAc-(1-&gt;4)-beta-D-GlcNAc}-L-asparaginyl-[protein] + UDP-N-acetyl-alpha-D-glucosamine = an N(4)-{beta-D-GlcNAc-(1-&gt;2)-[beta-D-GlcNAc-(1-&gt;4)]-alpha-D-Man-(1-&gt;3)-[alpha-D-Man-(1-&gt;6)]-beta-D-Man-(1-&gt;4)-beta-D-GlcNAc-(1-&gt;4)-beta-D-GlcNAc}-L-asparaginyl-[protein] + UDP + H(+). The enzyme catalyses an N(4)-{beta-D-GlcNAc-(1-&gt;2)-alpha-D-Man-(1-&gt;3)-[beta-D-GlcNAc-(1-&gt;2)-[beta-D-GlcNAc-(1-&gt;6)]-alpha-D-Man-(1-&gt;6)]-beta-D-Man-(1-&gt;4)-beta-D-GlcNAc-(1-&gt;4)-beta-D-GlcNAc}-L-asparaginyl-[protein] + UDP-N-acetyl-alpha-D-glucosamine = an N(4)-{beta-D-GlcNAc-(1-&gt;2)-[beta-D-GlcNAc-(1-&gt;4)]-alpha-D-Man-(1-&gt;3)-[beta-D-GlcNAc-(1-&gt;2)-[beta-D-GlcNAc-(1-&gt;6)]-alpha-D-Man-(1-&gt;6)]-beta-D-Man-(1-&gt;4)-beta-D-GlcNAc-(1-&gt;4)-beta-D-GlcNAc}-L-asparaginyl-[protein] + UDP + H(+). It catalyses the reaction an N(4)-{beta-D-GlcNAc-(1-&gt;2)-alpha-D-Man-(1-&gt;3)-[beta-D-GlcNAc-(1-&gt;2)-alpha-D-Man-(1-&gt;6)]-beta-D-Man-(1-&gt;4)-beta-D-GlcNAc-(1-&gt;4)-[alpha-L-Fuc-(1-&gt;6)]-beta-D-GlcNAc}-L-asparaginyl-[protein] + UDP-N-acetyl-alpha-D-glucosamine = N(4)-{beta-D-GlcNAc-(1-&gt;2)-[beta-D-GlcNAc-(1-&gt;4)]-alpha-D-Man-(1-&gt;3)-[beta-D-GlcNAc-(1-&gt;2)-alpha-D-Man-(1-&gt;6)]-beta-D-Man-(1-&gt;4)-beta-D-GlcNAc-(1-&gt;4)-[alpha-L-Fuc-(1-&gt;6)]-beta-D-GlcNAc}-asparaginyl-[protein] + UDP + H(+). The catalysed reaction is an N(4)-{beta-D-GlcNAc-(1-&gt;2)-alpha-D-Man-(1-&gt;3)-[beta-D-Gal-(1-&gt;4)-beta-D-GlcNAc-(1-&gt;2)-alpha-D-Man-(1-&gt;6)]-beta-D-Man-(1-&gt;4)-beta-D-GlcNAc-(1-&gt;4)-beta-D-GlcNAc}-L-asparaginyl-[protein] + UDP-N-acetyl-alpha-D-glucosamine = an N(4)-{beta-D-GlcNAc-(1-&gt;2)-[beta-D-GlcNAc-(1-&gt;4)]-alpha-D-Man-(1-&gt;3)-[beta-D-Gal-(1-&gt;4)-beta-D-GlcNAc-(1-&gt;2)-alpha-D-Man-(1-&gt;6)]-beta-D-Man-(1-&gt;4)-beta-D-GlcNAc-(1-&gt;4)-beta-D-GlcNAc}-L-asparaginyl-[protein] + UDP + H(+). It carries out the reaction N(4)-{beta-D-GlcNAc-(1-&gt;2)-alpha-D-Man-(1-&gt;3)-[alpha-D-Man-(1-&gt;3)-{alpha-D-Man-(1-&gt;6)}-alpha-D-Man-(1-&gt;6)]-beta-D-Man-(1-&gt;4)-beta-D-GlcNAc-(1-&gt;4)-beta-D-GlcNAc}-asparaginyl-[protein] + UDP-N-acetyl-alpha-D-glucosamine = N(4)-{beta-D-GlcNAc-(1-&gt;2)-[beta-D-GlcNAc-(1-&gt;4)]-alpha-D-Man-(1-&gt;3)-[alpha-D-Man-(1-&gt;3)-{alpha-D-Man-(1-&gt;6)}-alpha-D-Man-(1-&gt;6)]-beta-D-Man-(1-&gt;4)-beta-D-GlcNAc-(1-&gt;4)-beta-D-GlcNAc}-asparaginyl-[protein] + UDP + H(+). The enzyme catalyses N(4)-{beta-D-GlcNAc-(1-&gt;2)-alpha-D-Man-(1-&gt;3)-beta-D-Man-(1-&gt;4)-beta-D-GlcNAc-(1-&gt;4)-beta-D-GlcNAc}-asparaginyl-[protein] + UDP-N-acetyl-alpha-D-glucosamine = N(4)-{beta-D-GlcNAc-(1-&gt;2)-[beta-D-GlcNAc-(1-&gt;4)]-alpha-D-Man-(1-&gt;3)-beta-D-Man-(1-&gt;4)-beta-D-GlcNAc-(1-&gt;4)-beta-D-GlcNAc}-asparaginyl-[protein] + UDP + H(+). Its pathway is protein modification; protein glycosylation. With respect to regulation, inhibited by UDP. Functionally, glycosyltransferase that catalyze the transfer of GlcNAc from UDP-GlcNAc to the GlcNAcbeta1-2Manalpha1-3 arm of the core structure of N-linked glycans through a beta1-4 linkage and participates in the production of tri- and tetra-antennary N-linked sugar chains. Involved in glucose transport by mediating SLC2A2/GLUT2 glycosylation, thereby controlling cell-surface expression of SLC2A2 in pancreatic beta cells. In Macaca fascicularis (Crab-eating macaque), this protein is Alpha-1,3-mannosyl-glycoprotein 4-beta-N-acetylglucosaminyltransferase A.